The chain runs to 360 residues: DNA replication and repair protein RecF (360 aa).

Glycine 30–threonine 37 is a binding site for ATP.

The protein belongs to the RecF family.

The protein localises to the cytoplasm. Its function is as follows. The RecF protein is involved in DNA metabolism; it is required for DNA replication and normal SOS inducibility. RecF binds preferentially to single-stranded, linear DNA. It also seems to bind ATP. This is DNA replication and repair protein RecF from Shewanella pealeana (strain ATCC 700345 / ANG-SQ1).